We begin with the raw amino-acid sequence, 442 residues long: MGKEKEHLNLVVIGHVDSGKSTTTGHLIYKLGGIDARTIEKFEKESAEMGKASFKYAWVLDKLKAERERGITIDIALWKFETENRHYTIIDAPGHRDFIKNMITGTSQADAAILIIASGTGEFEAGISKEGQTREHALLAYTMGVKQMVVAMNKMDSTEPPYSEDRYEEIKKEVSTFLAKVGYKPAKMNFVPISGFQGDNIQENSTNMPWYKGPTLCAALDSFKIPKRPIAKPLRLPLQDVYKIGGIGTVPVGRVETGVLKAGMVITFAPKGCSAECKSVEMHHEEVPEAAPGNNVGFNVKGLSVKDIKRGFVASDSKNDPATDTESFVSHTIVMNHPGEIKAGYTPVIDCHTAHIACKFEELLTKADKRSGKMTEENPKFLKAGDAGLIRLSPSKPLCVETFATYAPLGRFAVRDMRQTVAVGVIQEIKKKATEDKKGKKK.

The 223-residue stretch at 5–227 (KEHLNLVVIG…AALDSFKIPK (223 aa)) folds into the tr-type G domain. The G1 stretch occupies residues 14–21 (GHVDSGKS). GTP is bound at residue 14–21 (GHVDSGKS). The tract at residues 70 to 74 (GITID) is G2. Residues 91 to 94 (DAPG) are G3. GTP is bound by residues 91–95 (DAPGH) and 153–156 (NKMD). The segment at 153-156 (NKMD) is G4. The interval 194–196 (SGF) is G5.

This sequence belongs to the TRAFAC class translation factor GTPase superfamily. Classic translation factor GTPase family. EF-Tu/EF-1A subfamily.

It is found in the cytoplasm. Its function is as follows. This protein promotes the GTP-dependent binding of aminoacyl-tRNA to the A-site of ribosomes during protein biosynthesis. In Euplotes crassus, this protein is Elongation factor 1-alpha 1 (EFA1).